Here is a 221-residue protein sequence, read N- to C-terminus: Oxaloacetate tautomerase FAHD1, mitochondrial (221 aa).

Residues 1 to 24 (MAASRPLSRFWEWGKNIVCVGRNY) constitute a mitochondrion transit peptide. Residue R22 participates in oxalate binding. S37 bears the Phosphoserine mark. The Mg(2+) site is built by E68, E70, and D99. Residue K110 is modified to N6-acetyllysine. N6-succinyllysine is present on K112. Positions 120 and 189 each coordinate oxalate.

This sequence belongs to the FAH family. As to quaternary structure, homodimer. Mg(2+) serves as cofactor. Mn(2+) is required as a cofactor. In terms of tissue distribution, ubiquitous (at protein level).

It is found in the mitochondrion. It localises to the cytoplasm. Its subcellular location is the cytosol. The catalysed reaction is oxaloacetate = enol-oxaloacetate. It carries out the reaction oxaloacetate + H(+) = pyruvate + CO2. The enzyme catalyses a 3-acylpyruvate + H2O = a carboxylate + pyruvate + H(+). It catalyses the reaction acetylpyruvate + H2O = acetate + pyruvate + H(+). The catalysed reaction is 3-fumarylpyruvate + H2O = fumarate + pyruvate + H(+). Oxaloacetate decarboxylation is competitively inhibited by oxalate. Its function is as follows. Tautomerase that converts enol-oxaloacetate, a strong inhibitor of succinate dehydrogenase, to the physiological keto form of oxaloacetate. It is thereby required to maximize aerobic respiration efficiency by preventing succinate dehydrogenase inhibition. Also acts as a weak oxaloacetate decarboxylase (ODx), catalyzing the decarboxylation of oxaloacetate (OAA) to pyruvate and CO(2), and as such is likely a regulatory enzyme in the TCA cycle. Also displays acylpyruvase activity, being able to hydrolyze acetylpyruvate and fumarylpyruvate in vitro. Exhibits only a weak hydrolase activity on methylacetopyruvate and acetylacetone, and no activity toward acetoacetyl-CoA. This chain is Oxaloacetate tautomerase FAHD1, mitochondrial, found in Homo sapiens (Human).